The chain runs to 426 residues: Enolase (426 aa).

Q163 provides a ligand contact to (2R)-2-phosphoglycerate. E205 (proton donor) is an active-site residue. Residues D242, E285, and D312 each contribute to the Mg(2+) site. Residues K337, R366, S367, and K388 each coordinate (2R)-2-phosphoglycerate. Catalysis depends on K337, which acts as the Proton acceptor.

The protein belongs to the enolase family. Requires Mg(2+) as cofactor.

The protein resides in the cytoplasm. Its subcellular location is the secreted. It localises to the cell surface. The enzyme catalyses (2R)-2-phosphoglycerate = phosphoenolpyruvate + H2O. The protein operates within carbohydrate degradation; glycolysis; pyruvate from D-glyceraldehyde 3-phosphate: step 4/5. In terms of biological role, catalyzes the reversible conversion of 2-phosphoglycerate (2-PG) into phosphoenolpyruvate (PEP). It is essential for the degradation of carbohydrates via glycolysis. The sequence is that of Enolase from Caulobacter vibrioides (strain ATCC 19089 / CIP 103742 / CB 15) (Caulobacter crescentus).